A 465-amino-acid polypeptide reads, in one-letter code: Serine/threonine-protein kinase 38 (465 aa).

N-acetylalanine is present on alanine 2. Residues 62–87 (KRLRRSAHARKETEFLRLKRTRLGLE) form an interaction with S100B region. Threonine 74 is modified (phosphothreonine). The Protein kinase domain occupies 89–382 (FESLKVIGRG…VEEIKNNLFF (294 aa)). ATP contacts are provided by residues 95 to 103 (IGRGAFGEV) and lysine 118. The active-site Proton acceptor is aspartate 212. Phosphoserine is present on serine 264. Residue serine 281 is modified to Phosphoserine; by autocatalysis. Residues 306–311 (WSLGVI) carry the UFM1-interacting motif (UFIM) motif. The AGC-kinase C-terminal domain occupies 383-455 (EGVDWEHIRE…KRFEGLTARG (73 aa)). At threonine 444 the chain carries Phosphothreonine; by STK24/MST3.

The protein belongs to the protein kinase superfamily. AGC Ser/Thr protein kinase family. As to quaternary structure, homodimeric S100B binds two molecules of STK38. Interacts with MOB1 and MOB2. Interacts with MAP3K1 and MAP3K2 (via the kinase catalytic domain). Forms a tripartite complex with MOBKL1B and STK3/MST2. Interacts with MICAL1; leading to inhibit the protein kinase activity by antagonizing activation by MST1/STK4. The cofactor is Mg(2+). Post-translationally, ISGylated. In terms of processing, phosphorylated by STK3/MST2 and this is enhanced by MOBKL1B. As to expression, expressed at high levels in spleen, lung, thymus, brain and fat tissue.

It localises to the nucleus. The protein resides in the cytoplasm. The protein localises to the chromosome. It catalyses the reaction L-seryl-[protein] + ATP = O-phospho-L-seryl-[protein] + ADP + H(+). It carries out the reaction L-threonyl-[protein] + ATP = O-phospho-L-threonyl-[protein] + ADP + H(+). With respect to regulation, activated by binding of S100B which releases autoinhibitory N-lobe interactions, enabling ATP to bind and the autophosphorylation of Ser-281. Thr-444 then undergoes calcium-dependent phosphorylation by STK24/MST3. Interactions between phosphorylated Thr-444 and the N-lobe promote additional structural changes that complete the activation of the kinase. Autoinhibition is also released by the binding of MOB1/MOBKL1A and MOB2/HCCA2 to the N-terminal of STK38. Its function is as follows. Serine/threonine-protein kinase that acts as a negative regulator of MAP3K1/2 signaling. Converts MAP3K2 from its phosphorylated form to its non-phosphorylated form and inhibits autophosphorylation of MAP3K2. Acts as an ufmylation 'reader' in a kinase-independent manner: specifically recognizes and binds mono-ufmylated histone H4 in response to DNA damage, promoting the recruitment of SUV39H1 to the double-strand breaks, resulting in ATM activation. The chain is Serine/threonine-protein kinase 38 from Mus musculus (Mouse).